The chain runs to 180 residues: NAD(P)H-quinone oxidoreductase subunit I, chloroplastic (180 aa).

2 4Fe-4S ferredoxin-type domains span residues 55-84 and 95-124; these read GRIH…VDWR and LNYS…MTEE. Residues Cys64, Cys67, Cys70, Cys74, Cys104, Cys107, Cys110, and Cys114 each coordinate [4Fe-4S] cluster.

It belongs to the complex I 23 kDa subunit family. In terms of assembly, NDH is composed of at least 16 different subunits, 5 of which are encoded in the nucleus. The cofactor is [4Fe-4S] cluster.

The protein resides in the plastid. Its subcellular location is the chloroplast thylakoid membrane. It catalyses the reaction a plastoquinone + NADH + (n+1) H(+)(in) = a plastoquinol + NAD(+) + n H(+)(out). It carries out the reaction a plastoquinone + NADPH + (n+1) H(+)(in) = a plastoquinol + NADP(+) + n H(+)(out). Its function is as follows. NDH shuttles electrons from NAD(P)H:plastoquinone, via FMN and iron-sulfur (Fe-S) centers, to quinones in the photosynthetic chain and possibly in a chloroplast respiratory chain. The immediate electron acceptor for the enzyme in this species is believed to be plastoquinone. Couples the redox reaction to proton translocation, and thus conserves the redox energy in a proton gradient. This Oryza nivara (Indian wild rice) protein is NAD(P)H-quinone oxidoreductase subunit I, chloroplastic.